Reading from the N-terminus, the 481-residue chain is ATP synthase subunit beta (481 aa).

160 to 167 provides a ligand contact to ATP; it reads GGAGVGKT.

This sequence belongs to the ATPase alpha/beta chains family. As to quaternary structure, F-type ATPases have 2 components, CF(1) - the catalytic core - and CF(0) - the membrane proton channel. CF(1) has five subunits: alpha(3), beta(3), gamma(1), delta(1), epsilon(1). CF(0) has three main subunits: a(1), b(2) and c(9-12). The alpha and beta chains form an alternating ring which encloses part of the gamma chain. CF(1) is attached to CF(0) by a central stalk formed by the gamma and epsilon chains, while a peripheral stalk is formed by the delta and b chains.

The protein localises to the cell inner membrane. It catalyses the reaction ATP + H2O + 4 H(+)(in) = ADP + phosphate + 5 H(+)(out). In terms of biological role, produces ATP from ADP in the presence of a proton gradient across the membrane. The catalytic sites are hosted primarily by the beta subunits. In Myxococcus xanthus (strain DK1622), this protein is ATP synthase subunit beta.